The chain runs to 571 residues: Proline--tRNA ligase (571 aa).

This sequence belongs to the class-II aminoacyl-tRNA synthetase family. ProS type 1 subfamily. Homodimer.

It localises to the cytoplasm. The enzyme catalyses tRNA(Pro) + L-proline + ATP = L-prolyl-tRNA(Pro) + AMP + diphosphate. Catalyzes the attachment of proline to tRNA(Pro) in a two-step reaction: proline is first activated by ATP to form Pro-AMP and then transferred to the acceptor end of tRNA(Pro). As ProRS can inadvertently accommodate and process non-cognate amino acids such as alanine and cysteine, to avoid such errors it has two additional distinct editing activities against alanine. One activity is designated as 'pretransfer' editing and involves the tRNA(Pro)-independent hydrolysis of activated Ala-AMP. The other activity is designated 'posttransfer' editing and involves deacylation of mischarged Ala-tRNA(Pro). The misacylated Cys-tRNA(Pro) is not edited by ProRS. In Pseudomonas syringae pv. syringae (strain B728a), this protein is Proline--tRNA ligase.